Reading from the N-terminus, the 119-residue chain is Large ribosomal subunit protein bL20 (119 aa).

It belongs to the bacterial ribosomal protein bL20 family.

In terms of biological role, binds directly to 23S ribosomal RNA and is necessary for the in vitro assembly process of the 50S ribosomal subunit. It is not involved in the protein synthesizing functions of that subunit. In Vesicomyosocius okutanii subsp. Calyptogena okutanii (strain HA), this protein is Large ribosomal subunit protein bL20.